Reading from the N-terminus, the 478-residue chain is Probable serine carboxypeptidase CPVL (478 aa).

Positions methionine 1 to glycine 22 are cleaved as a signal peptide. Asparagine 83 and asparagine 134 each carry an N-linked (GlcNAc...) asparagine glycan. Serine 206 is an active-site residue. N-linked (GlcNAc...) asparagine glycosylation is found at asparagine 309 and asparagine 350. Residues aspartate 390 and histidine 450 contribute to the active site.

The protein belongs to the peptidase S10 family.

Functionally, may be involved in the digestion of phagocytosed particles in the lysosome, participation in an inflammatory protease cascade, and trimming of peptides for antigen presentation. The chain is Probable serine carboxypeptidase CPVL (CPVL) from Rattus norvegicus (Rat).